Here is a 185-residue protein sequence, read N- to C-terminus: Dihydrofolate reductase (185 aa).

In terms of domain architecture, DHFR spans 5–184 (KLNLIAAACD…ISYYFRVYKK (180 aa)). NADP(+) is bound by residues A11 and 17 to 23 (GIGVNGA). Substrate is bound at residue 31-36 (EMAYFT). 55–57 (RRT) provides a ligand contact to NADP(+). R71 serves as a coordination point for substrate. NADP(+) is bound by residues 77–79 (THN) and 117–124 (GGSSIYRA).

Belongs to the dihydrofolate reductase family.

The catalysed reaction is (6S)-5,6,7,8-tetrahydrofolate + NADP(+) = 7,8-dihydrofolate + NADPH + H(+). It participates in cofactor biosynthesis; tetrahydrofolate biosynthesis; 5,6,7,8-tetrahydrofolate from 7,8-dihydrofolate: step 1/1. Activated by dithiothreitol and p-chloromercuribenzoate. Inhibited by trimethoprim, methotrexate, sodium tetrathionate and hydroxymercuribenzoate. Functionally, key enzyme in folate metabolism. Catalyzes an essential reaction for de novo glycine and purine synthesis, and for DNA precursor synthesis. This is Dihydrofolate reductase (DHFR) from Heliothis virescens (Tobacco budworm moth).